Consider the following 201-residue polypeptide: Holliday junction branch migration complex subunit RuvA (201 aa).

The interval 1–63 (MIEYVRGELA…EDAYVLYGFA (63 aa)) is domain I. A domain II region spans residues 64-142 (DKQEREIFLL…TMGATVAGGS (79 aa)). Positions 143–151 (ASAGMLLQS) are flexible linker. A domain III region spans residues 152–201 (ASVEVQEEAVAALTMLGFAAAPSQKVVLAILKEEPDAPVEKVIKLALKRL).

It belongs to the RuvA family. Homotetramer. Forms an RuvA(8)-RuvB(12)-Holliday junction (HJ) complex. HJ DNA is sandwiched between 2 RuvA tetramers; dsDNA enters through RuvA and exits via RuvB. An RuvB hexamer assembles on each DNA strand where it exits the tetramer. Each RuvB hexamer is contacted by two RuvA subunits (via domain III) on 2 adjacent RuvB subunits; this complex drives branch migration. In the full resolvosome a probable DNA-RuvA(4)-RuvB(12)-RuvC(2) complex forms which resolves the HJ.

It is found in the cytoplasm. Its function is as follows. The RuvA-RuvB-RuvC complex processes Holliday junction (HJ) DNA during genetic recombination and DNA repair, while the RuvA-RuvB complex plays an important role in the rescue of blocked DNA replication forks via replication fork reversal (RFR). RuvA specifically binds to HJ cruciform DNA, conferring on it an open structure. The RuvB hexamer acts as an ATP-dependent pump, pulling dsDNA into and through the RuvAB complex. HJ branch migration allows RuvC to scan DNA until it finds its consensus sequence, where it cleaves and resolves the cruciform DNA. The polypeptide is Holliday junction branch migration complex subunit RuvA (Bacteroides thetaiotaomicron (strain ATCC 29148 / DSM 2079 / JCM 5827 / CCUG 10774 / NCTC 10582 / VPI-5482 / E50)).